A 212-amino-acid polypeptide reads, in one-letter code: Ribosome maturation factor RimM (212 aa).

Residues 105–181 (EEEFYYADLI…IDSITAGLDN (77 aa)) enclose the PRC barrel domain. The tract at residues 181–212 (NAELSGEEDEAEGPESARGSRPRGPKSAGEPR) is disordered.

The protein belongs to the RimM family. As to quaternary structure, binds ribosomal protein uS19.

The protein resides in the cytoplasm. An accessory protein needed during the final step in the assembly of 30S ribosomal subunit, possibly for assembly of the head region. Essential for efficient processing of 16S rRNA. May be needed both before and after RbfA during the maturation of 16S rRNA. It has affinity for free ribosomal 30S subunits but not for 70S ribosomes. The chain is Ribosome maturation factor RimM from Chelativorans sp. (strain BNC1).